The primary structure comprises 233 residues: Segregation and condensation protein A (233 aa).

Belongs to the ScpA family. Component of a cohesin-like complex composed of ScpA, ScpB and the Smc homodimer, in which ScpA and ScpB bind to the head domain of Smc. The presence of the three proteins is required for the association of the complex with DNA.

It is found in the cytoplasm. Its function is as follows. Participates in chromosomal partition during cell division. May act via the formation of a condensin-like complex containing Smc and ScpB that pull DNA away from mid-cell into both cell halves. The polypeptide is Segregation and condensation protein A (Streptococcus pyogenes serotype M1).